The sequence spans 295 residues: Tyrosine recombinase XerD (295 aa).

One can recognise a Core-binding (CB) domain in the interval 1-85 (METIIEEYLK…TIRSFHQFAL (85 aa)). The Tyr recombinase domain maps to 106 to 289 (KLPDVLDVEE…SKTQIRQMYN (184 aa)). Catalysis depends on residues Arg-146, Lys-170, His-241, Arg-244, and His-267. Tyr-276 serves as the catalytic O-(3'-phospho-DNA)-tyrosine intermediate.

It belongs to the 'phage' integrase family. XerD subfamily. In terms of assembly, forms a cyclic heterotetrameric complex composed of two molecules of XerC and two molecules of XerD.

It is found in the cytoplasm. Functionally, site-specific tyrosine recombinase, which acts by catalyzing the cutting and rejoining of the recombining DNA molecules. The XerC-XerD complex is essential to convert dimers of the bacterial chromosome into monomers to permit their segregation at cell division. It also contributes to the segregational stability of plasmids. The polypeptide is Tyrosine recombinase XerD (Staphylococcus haemolyticus (strain JCSC1435)).